Reading from the N-terminus, the 389-residue chain is Aspartic protease 6 (389 aa).

Positions M1–A15 are cleaved as a signal peptide. The 314-residue stretch at Y71 to A384 folds into the Peptidase A1 domain. N-linked (GlcNAc...) asparagine glycosylation occurs at N74. D89 is an active-site residue. A disulfide bridge links C102 with C106. Residue D277 is part of the active site. A disulfide bond links C312 and C344.

This sequence belongs to the peptidase A1 family. In terms of processing, glycosylated. Has phosphorylcholine-substituted oligosaccharide N-glycans. Expressed in intestine, muscles, pharynx and hypodermis.

Its subcellular location is the secreted. Its function is as follows. Aspartic protease. The chain is Aspartic protease 6 from Caenorhabditis elegans.